A 226-amino-acid chain; its full sequence is Large ribosomal subunit protein uL1 (226 aa).

Belongs to the universal ribosomal protein uL1 family. Part of the 50S ribosomal subunit.

Functionally, binds directly to 23S rRNA. The L1 stalk is quite mobile in the ribosome, and is involved in E site tRNA release. Protein L1 is also a translational repressor protein, it controls the translation of the L11 operon by binding to its mRNA. This Mycoplasmoides gallisepticum (strain R(low / passage 15 / clone 2)) (Mycoplasma gallisepticum) protein is Large ribosomal subunit protein uL1.